The sequence spans 27 residues: VAPFPHGKLVTYKYIADVKAGVDPSLV.

Homodimer. As to expression, hemolymph.

It is found in the secreted. It localises to the extracellular space. Functionally, unknown (it might play a role in lipid transport and/or storage protein metabolism during metamorphosis). The protein is Larval-specific very high density lipoprotein of Apis mellifera (Honeybee).